Here is a 675-residue protein sequence, read N- to C-terminus: Transmembrane protein 232 (675 aa).

A helical transmembrane segment spans residues 163–183 (LVKIGYLIFLRLFVFFLHGHL). The stretch at 598 to 634 (WQKDMEARKREEEAYKAQNQKDKEEKEKIHFQEIMKQ) forms a coiled coil. Positions 605–624 (RKREEEAYKAQNQKDKEEKE) are disordered.

In terms of tissue distribution, high expression in the testis and weak expression levels in the spleen, liver, brain, uterus, lung, epididymis and kidney. Not detected in the heart or ovary.

It localises to the membrane. Its function is as follows. Plays a critical role for male fertility and sperm motility by regulating sperm cytoplasm removal and maintaining axoneme integrity. This is Transmembrane protein 232 (Tmem232) from Mus musculus (Mouse).